Reading from the N-terminus, the 345-residue chain is 3-hydroxy-5-methyl-1-naphthoate 3-O-methyltransferase (345 aa).

S-adenosyl-L-methionine is bound at residue D205. H252 functions as the Proton acceptor in the catalytic mechanism.

It belongs to the class I-like SAM-binding methyltransferase superfamily. Cation-independent O-methyltransferase family.

The catalysed reaction is 3-hydroxy-5-methyl-1-naphthoate + S-adenosyl-L-methionine = 3-methoxy-5-methyl-1-naphthoate + S-adenosyl-L-homocysteine + H(+). The protein operates within antibiotic biosynthesis. With respect to regulation, inhibited by different divalent cations, such as Mg(2+), Mn(2+), Fe(2+), Cu(2+) and Zn(2+). In terms of biological role, O-methyltransferase that mediates the formation of 3-methoxy-5-methyl-1-naphthoate from 3-hydroxy-5-methyl-1-naphthoate in the biosynthesis of the antitumor antibiotic azinomycin B. This Streptomyces sahachiroi protein is 3-hydroxy-5-methyl-1-naphthoate 3-O-methyltransferase.